A 130-amino-acid polypeptide reads, in one-letter code: UPF0225 protein DR_0483 (130 aa).

The protein belongs to the UPF0225 family.

This Deinococcus radiodurans (strain ATCC 13939 / DSM 20539 / JCM 16871 / CCUG 27074 / LMG 4051 / NBRC 15346 / NCIMB 9279 / VKM B-1422 / R1) protein is UPF0225 protein DR_0483.